Consider the following 198-residue polypeptide: Na(+)-translocating NADH-quinone reductase subunit E (198 aa).

6 consecutive transmembrane segments (helical) span residues 11-31 (SVFI…FLAV), 35-55 (VSTA…AVPA), 77-97 (FLNF…LEMI), 110-130 (GIFL…SFMV), 140-160 (VVYG…LAGL), and 176-196 (LGIT…FSGI).

Belongs to the NqrDE/RnfAE family. As to quaternary structure, composed of six subunits; NqrA, NqrB, NqrC, NqrD, NqrE and NqrF.

The protein resides in the cell inner membrane. It catalyses the reaction a ubiquinone + n Na(+)(in) + NADH + H(+) = a ubiquinol + n Na(+)(out) + NAD(+). In terms of biological role, NQR complex catalyzes the reduction of ubiquinone-1 to ubiquinol by two successive reactions, coupled with the transport of Na(+) ions from the cytoplasm to the periplasm. NqrA to NqrE are probably involved in the second step, the conversion of ubisemiquinone to ubiquinol. The polypeptide is Na(+)-translocating NADH-quinone reductase subunit E (Actinobacillus pleuropneumoniae serotype 5b (strain L20)).